Consider the following 369-residue polypeptide: Chorismate synthase (369 aa).

Residues Arg-48 and Arg-54 each contribute to the NADP(+) site. Residues 125 to 127 (RSS), 238 to 239 (NA), Gly-278, 293 to 297 (KPTSS), and Arg-319 contribute to the FMN site.

The protein belongs to the chorismate synthase family. Homotetramer. FMNH2 serves as cofactor.

It carries out the reaction 5-O-(1-carboxyvinyl)-3-phosphoshikimate = chorismate + phosphate. The protein operates within metabolic intermediate biosynthesis; chorismate biosynthesis; chorismate from D-erythrose 4-phosphate and phosphoenolpyruvate: step 7/7. In terms of biological role, catalyzes the anti-1,4-elimination of the C-3 phosphate and the C-6 proR hydrogen from 5-enolpyruvylshikimate-3-phosphate (EPSP) to yield chorismate, which is the branch point compound that serves as the starting substrate for the three terminal pathways of aromatic amino acid biosynthesis. This reaction introduces a second double bond into the aromatic ring system. The protein is Chorismate synthase of Burkholderia mallei (strain NCTC 10229).